The chain runs to 323 residues: Prenyl transferase (323 aa).

Isopentenyl diphosphate contacts are provided by Lys46, Arg49, and His81. Mg(2+) contacts are provided by Asp88 and Asp92. Residue Arg97 participates in an all-trans-polyprenyl diphosphate binding. An isopentenyl diphosphate-binding site is contributed by Arg98. 3 residues coordinate an all-trans-polyprenyl diphosphate: Lys174, Thr175, and Gln212.

This sequence belongs to the FPP/GGPP synthase family. Mg(2+) is required as a cofactor.

It localises to the plastid. The protein resides in the chloroplast. Possible role in synthesis of the nonaprenyl side chain of plastoquinone or in synthesis of other prenyl chains such as undekaprenyl pyrophosphate. The protein is Prenyl transferase (preA) of Cyanidium caldarium (Red alga).